Here is a 290-residue protein sequence, read N- to C-terminus: Zinc finger protein-like 1 homolog (290 aa).

The B box-type; degenerate zinc finger occupies Met-1–Trp-43. The RING-type; atypical zinc-finger motif lies at Cys-53 to Ser-101. A compositionally biased stretch (polar residues) spans Asn-156–Arg-168. A disordered region spans residues Asn-156–Ser-175. Residues Trp-249–Leu-269 traverse the membrane as a helical segment.

Belongs to the ZFPL1 family.

The protein localises to the membrane. The sequence is that of Zinc finger protein-like 1 homolog from Aedes aegypti (Yellowfever mosquito).